A 971-amino-acid chain; its full sequence is Isoleucine--tRNA ligase (971 aa).

Positions 64–74 match the 'HIGH' region motif; the sequence is PYANGHIHIGH. Glu-602 serves as a coordination point for L-isoleucyl-5'-AMP. Residues 643–647 carry the 'KMSKS' region motif; it reads KMSKS. Position 646 (Lys-646) interacts with ATP.

This sequence belongs to the class-I aminoacyl-tRNA synthetase family. IleS type 1 subfamily. In terms of assembly, monomer.

The protein resides in the cytoplasm. It catalyses the reaction tRNA(Ile) + L-isoleucine + ATP = L-isoleucyl-tRNA(Ile) + AMP + diphosphate. In terms of biological role, catalyzes the attachment of isoleucine to tRNA(Ile). As IleRS can inadvertently accommodate and process structurally similar amino acids such as valine, to avoid such errors it has two additional distinct tRNA(Ile)-dependent editing activities. One activity is designated as 'pretransfer' editing and involves the hydrolysis of activated Val-AMP. The other activity is designated 'posttransfer' editing and involves deacylation of mischarged Val-tRNA(Ile). The chain is Isoleucine--tRNA ligase from Bartonella henselae (strain ATCC 49882 / DSM 28221 / CCUG 30454 / Houston 1) (Rochalimaea henselae).